Reading from the N-terminus, the 371-residue chain is UDP-N-acetylglucosamine--N-acetylmuramyl-(pentapeptide) pyrophosphoryl-undecaprenol N-acetylglucosamine transferase (371 aa).

Residues Thr10–Gly12, Asn124, Arg166, Ser196, and Gln301 contribute to the UDP-N-acetyl-alpha-D-glucosamine site.

The protein belongs to the glycosyltransferase 28 family. MurG subfamily.

It is found in the cell membrane. The enzyme catalyses di-trans,octa-cis-undecaprenyl diphospho-N-acetyl-alpha-D-muramoyl-L-alanyl-D-glutamyl-meso-2,6-diaminopimeloyl-D-alanyl-D-alanine + UDP-N-acetyl-alpha-D-glucosamine = di-trans,octa-cis-undecaprenyl diphospho-[N-acetyl-alpha-D-glucosaminyl-(1-&gt;4)]-N-acetyl-alpha-D-muramoyl-L-alanyl-D-glutamyl-meso-2,6-diaminopimeloyl-D-alanyl-D-alanine + UDP + H(+). Its pathway is cell wall biogenesis; peptidoglycan biosynthesis. In terms of biological role, cell wall formation. Catalyzes the transfer of a GlcNAc subunit on undecaprenyl-pyrophosphoryl-MurNAc-pentapeptide (lipid intermediate I) to form undecaprenyl-pyrophosphoryl-MurNAc-(pentapeptide)GlcNAc (lipid intermediate II). The chain is UDP-N-acetylglucosamine--N-acetylmuramyl-(pentapeptide) pyrophosphoryl-undecaprenol N-acetylglucosamine transferase from Moorella thermoacetica (strain ATCC 39073 / JCM 9320).